The following is a 560-amino-acid chain: Dihydroxy-acid dehydratase (560 aa).

A disordered region spans residues 1-20; that stretch reads MGDNLKKRSSMTTDGDNRAP. A [2Fe-2S] cluster-binding site is contributed by C52. D84 contributes to the Mg(2+) binding site. Position 125 (C125) interacts with [2Fe-2S] cluster. Mg(2+)-binding residues include D126 and K127. K127 is modified (N6-carboxylysine). Residue C197 coordinates [2Fe-2S] cluster. Position 448 (E448) interacts with Mg(2+). S474 acts as the Proton acceptor in catalysis.

The protein belongs to the IlvD/Edd family. In terms of assembly, homodimer. [2Fe-2S] cluster is required as a cofactor. Requires Mg(2+) as cofactor.

It carries out the reaction (2R)-2,3-dihydroxy-3-methylbutanoate = 3-methyl-2-oxobutanoate + H2O. It catalyses the reaction (2R,3R)-2,3-dihydroxy-3-methylpentanoate = (S)-3-methyl-2-oxopentanoate + H2O. Its pathway is amino-acid biosynthesis; L-isoleucine biosynthesis; L-isoleucine from 2-oxobutanoate: step 3/4. It participates in amino-acid biosynthesis; L-valine biosynthesis; L-valine from pyruvate: step 3/4. Its function is as follows. Functions in the biosynthesis of branched-chain amino acids. Catalyzes the dehydration of (2R,3R)-2,3-dihydroxy-3-methylpentanoate (2,3-dihydroxy-3-methylvalerate) into 2-oxo-3-methylpentanoate (2-oxo-3-methylvalerate) and of (2R)-2,3-dihydroxy-3-methylbutanoate (2,3-dihydroxyisovalerate) into 2-oxo-3-methylbutanoate (2-oxoisovalerate), the penultimate precursor to L-isoleucine and L-valine, respectively. This Leptospira interrogans serogroup Icterohaemorrhagiae serovar copenhageni (strain Fiocruz L1-130) protein is Dihydroxy-acid dehydratase.